The primary structure comprises 91 residues: Putative septation protein SpoVG (91 aa).

This sequence belongs to the SpoVG family.

Functionally, could be involved in septation. This chain is Putative septation protein SpoVG, found in Clostridium beijerinckii (strain ATCC 51743 / NCIMB 8052) (Clostridium acetobutylicum).